The following is a 353-amino-acid chain: Photosystem II protein D1 (353 aa).

Thr-2 is subject to N-acetylthreonine. Position 2 is a phosphothreonine (Thr-2). A run of 3 helical transmembrane segments spans residues 29 to 46 (YIGWFGVLMIPTLLTATS), 118 to 133 (HFLLGVACYMGREWEL), and 142 to 156 (WIAVAYSAPVAAATA). His-118 contributes to the chlorophyll a binding site. Position 126 (Tyr-126) interacts with pheophytin a. Asp-170 and Glu-189 together coordinate [CaMn4O5] cluster. A helical transmembrane segment spans residues 197-218 (FHMLGVAGVFGGSLFSAMHGSL). Chlorophyll a is bound at residue His-198. A quinone contacts are provided by residues His-215 and 264 to 265 (SF). A Fe cation-binding site is contributed by His-215. His-272 serves as a coordination point for Fe cation. Residues 274-288 (FLAAWPVVGIWFTAL) form a helical membrane-spanning segment. Positions 332, 333, 342, and 344 each coordinate [CaMn4O5] cluster. A propeptide spanning residues 345-353 (VVEAPSTNG) is cleaved from the precursor.

The protein belongs to the reaction center PufL/M/PsbA/D family. In terms of assembly, PSII is composed of 1 copy each of membrane proteins PsbA, PsbB, PsbC, PsbD, PsbE, PsbF, PsbH, PsbI, PsbJ, PsbK, PsbL, PsbM, PsbT, PsbX, PsbY, PsbZ, Psb30/Ycf12, at least 3 peripheral proteins of the oxygen-evolving complex and a large number of cofactors. It forms dimeric complexes. The D1/D2 heterodimer binds P680, chlorophylls that are the primary electron donor of PSII, and subsequent electron acceptors. It shares a non-heme iron and each subunit binds pheophytin, quinone, additional chlorophylls, carotenoids and lipids. D1 provides most of the ligands for the Mn4-Ca-O5 cluster of the oxygen-evolving complex (OEC). There is also a Cl(-1) ion associated with D1 and D2, which is required for oxygen evolution. The PSII complex binds additional chlorophylls, carotenoids and specific lipids. serves as cofactor. In terms of processing, tyr-161 forms a radical intermediate that is referred to as redox-active TyrZ, YZ or Y-Z. C-terminally processed by CTPA; processing is essential to allow assembly of the oxygen-evolving complex and thus photosynthetic growth.

The protein resides in the plastid. It localises to the chloroplast thylakoid membrane. The catalysed reaction is 2 a plastoquinone + 4 hnu + 2 H2O = 2 a plastoquinol + O2. Its function is as follows. Photosystem II (PSII) is a light-driven water:plastoquinone oxidoreductase that uses light energy to abstract electrons from H(2)O, generating O(2) and a proton gradient subsequently used for ATP formation. It consists of a core antenna complex that captures photons, and an electron transfer chain that converts photonic excitation into a charge separation. The D1/D2 (PsbA/PsbD) reaction center heterodimer binds P680, the primary electron donor of PSII as well as several subsequent electron acceptors. In Aethionema grandiflorum (Persian stone-cress), this protein is Photosystem II protein D1.